Reading from the N-terminus, the 610-residue chain is UvrABC system protein C (610 aa).

Residues Ser-16–Val-94 enclose the GIY-YIG domain. In terms of domain architecture, UVR spans Asp-204–Val-239.

This sequence belongs to the UvrC family. Interacts with UvrB in an incision complex.

The protein localises to the cytoplasm. The UvrABC repair system catalyzes the recognition and processing of DNA lesions. UvrC both incises the 5' and 3' sides of the lesion. The N-terminal half is responsible for the 3' incision and the C-terminal half is responsible for the 5' incision. The polypeptide is UvrABC system protein C (Salmonella typhimurium (strain LT2 / SGSC1412 / ATCC 700720)).